The sequence spans 538 residues: Nicotinate phosphoribosyltransferase (538 aa).

Residues Y21 and T210 each contribute to the nicotinate site. Phosphohistidine is present on H213. R318 is a binding site for nicotinate. T380 lines the 5-phospho-alpha-D-ribose 1-diphosphate pocket.

Belongs to the NAPRTase family. Homodimer. It depends on Mg(2+) as a cofactor. Mn(2+) serves as cofactor. Transiently phosphorylated on a His residue during the reaction cycle. Phosphorylation strongly increases the affinity for substrates and increases the rate of nicotinate D-ribonucleotide production. Dephosphorylation regenerates the low-affinity form of the enzyme, leading to product release. As to expression, abundantly expressed in the small intestine, liver and kidney.

The protein resides in the cytoplasm. It is found in the cytosol. The enzyme catalyses nicotinate + 5-phospho-alpha-D-ribose 1-diphosphate + ATP + H2O = nicotinate beta-D-ribonucleotide + ADP + phosphate + diphosphate. The protein operates within cofactor biosynthesis; NAD(+) biosynthesis; nicotinate D-ribonucleotide from nicotinate: step 1/1. Its function is as follows. Catalyzes the first step in the biosynthesis of NAD from nicotinic acid, the ATP-dependent synthesis of beta-nicotinate D-ribonucleotide from nicotinate and 5-phospho-D-ribose 1-phosphate. Helps prevent cellular oxidative stress via its role in NAD biosynthesis. The sequence is that of Nicotinate phosphoribosyltransferase (Naprt) from Mus musculus (Mouse).